We begin with the raw amino-acid sequence, 223 residues long: Alpha-S2-casein (223 aa).

The N-terminal stretch at 1–15 (MKFFIFTCLLAVALA) is a signal peptide. S23, S24, S25, S72, S73, S74, S77, S145, S147, S151, and S159 each carry phosphoserine. The segment at residues 77-141 (SAEVAPEEIK…AGPFTPTVNR (65 aa)) is a repeat. The segment at residues 159 to 223 (STEVFTKKTK…TNAIPYVRYL (65 aa)) is a repeat.

It belongs to the alpha-casein family. Mammary gland specific. Secreted in milk.

It is found in the secreted. Its function is as follows. Important role in the capacity of milk to transport calcium phosphate. The chain is Alpha-S2-casein (CSN1S2) from Capra hircus (Goat).